The chain runs to 238 residues: 1-(5-phosphoribosyl)-5-[(5-phosphoribosylamino)methylideneamino] imidazole-4-carboxamide isomerase (238 aa).

Asp-8 acts as the Proton acceptor in catalysis. Asp-129 serves as the catalytic Proton donor.

This sequence belongs to the HisA/HisF family.

It is found in the cytoplasm. It carries out the reaction 1-(5-phospho-beta-D-ribosyl)-5-[(5-phospho-beta-D-ribosylamino)methylideneamino]imidazole-4-carboxamide = 5-[(5-phospho-1-deoxy-D-ribulos-1-ylimino)methylamino]-1-(5-phospho-beta-D-ribosyl)imidazole-4-carboxamide. Its pathway is amino-acid biosynthesis; L-histidine biosynthesis; L-histidine from 5-phospho-alpha-D-ribose 1-diphosphate: step 4/9. The polypeptide is 1-(5-phosphoribosyl)-5-[(5-phosphoribosylamino)methylideneamino] imidazole-4-carboxamide isomerase (Myxococcus xanthus (strain DK1622)).